The primary structure comprises 535 residues: Peptide chain release factor 3 (535 aa).

The tr-type G domain occupies 8 to 278 (ARRRTFAIIS…VDQAPAPGPR (271 aa)). GTP contacts are provided by residues 17-24 (SHPDAGKT), 85-89 (DTPGH), and 139-142 (NKLD).

It belongs to the TRAFAC class translation factor GTPase superfamily. Classic translation factor GTPase family. PrfC subfamily.

It localises to the cytoplasm. Functionally, increases the formation of ribosomal termination complexes and stimulates activities of RF-1 and RF-2. It binds guanine nucleotides and has strong preference for UGA stop codons. It may interact directly with the ribosome. The stimulation of RF-1 and RF-2 is significantly reduced by GTP and GDP, but not by GMP. This is Peptide chain release factor 3 from Bordetella parapertussis (strain 12822 / ATCC BAA-587 / NCTC 13253).